We begin with the raw amino-acid sequence, 621 residues long: Chaperone protein HscA homolog (621 aa).

It belongs to the heat shock protein 70 family.

In terms of biological role, chaperone involved in the maturation of iron-sulfur cluster-containing proteins. Has a low intrinsic ATPase activity which is markedly stimulated by HscB. This Azotobacter vinelandii (strain DJ / ATCC BAA-1303) protein is Chaperone protein HscA homolog.